The following is a 71-amino-acid chain: Beta-defensin 124 (71 aa).

A signal peptide spans 1–22 (MTQLLLFLVALLVLGHVPSGRS). 3 cysteine pairs are disulfide-bonded: Cys27–Cys54, Cys34–Cys48, and Cys38–Cys55.

Belongs to the beta-defensin family.

The protein resides in the secreted. Has antibacterial activity. This is Beta-defensin 124 (DEFB124) from Pan troglodytes (Chimpanzee).